The following is a 243-amino-acid chain: ATP synthase subunit a, chloroplastic (243 aa).

Helical transmembrane passes span G32–G52, T96–I116, D129–I149, L195–L215, and G216–G236.

It belongs to the ATPase A chain family. As to quaternary structure, F-type ATPases have 2 components, CF(1) - the catalytic core - and CF(0) - the membrane proton channel. CF(1) has five subunits: alpha(3), beta(3), gamma(1), delta(1), epsilon(1). CF(0) has four main subunits: a, b, b' and c.

The protein localises to the plastid. It is found in the chloroplast thylakoid membrane. In terms of biological role, key component of the proton channel; it plays a direct role in the translocation of protons across the membrane. This Tetradesmus obliquus (Green alga) protein is ATP synthase subunit a, chloroplastic.